We begin with the raw amino-acid sequence, 131 residues long: Small ribosomal subunit protein uS8 (131 aa).

The protein belongs to the universal ribosomal protein uS8 family. In terms of assembly, part of the 30S ribosomal subunit. Contacts proteins S5 and S12.

Functionally, one of the primary rRNA binding proteins, it binds directly to 16S rRNA central domain where it helps coordinate assembly of the platform of the 30S subunit. This chain is Small ribosomal subunit protein uS8, found in Burkholderia ambifaria (strain MC40-6).